A 373-amino-acid polypeptide reads, in one-letter code: Centrosomal protein of 41 kDa (373 aa).

Positions 89–127 are disordered; the sequence is QRLEDNDSATSEPDAEITAKTNGNGSPGEQSPSPVQFIN. Residues serine 96 and serine 99 each carry the phosphoserine modification. The span at 107–127 shows a compositional bias: polar residues; it reads AKTNGNGSPGEQSPSPVQFIN. The residue at position 109 (threonine 109) is a Phosphothreonine. Serine 114 and serine 121 each carry phosphoserine. The 98-residue stretch at 169–266 folds into the Rhodanese domain; that stretch reads PDCPFLLLDV…LAQKFPEGLI (98 aa). 2 disordered regions span residues 275-300 and 315-373; these read QQALPPGSARKRSSPKVPPLPAENKW and EEDQ…KPWK. Arginine 343 is modified (omega-N-methylarginine).

The protein belongs to the CEP41 family. As to quaternary structure, found in a complex with TTLL6.

The protein localises to the cytoplasm. It is found in the cytoskeleton. The protein resides in the microtubule organizing center. Its subcellular location is the centrosome. It localises to the cell projection. The protein localises to the cilium. It is found in the cilium basal body. In terms of biological role, required during ciliogenesis for tubulin glutamylation in cilium. Probably acts by participating in the transport of TTLL6, a tubulin polyglutamylase, between the basal body and the cilium. The chain is Centrosomal protein of 41 kDa (CEP41) from Bos taurus (Bovine).